Reading from the N-terminus, the 325-residue chain is Peroxidase 45 (325 aa).

An N-terminal signal peptide occupies residues 1 to 25 (MEKNTSQTIFSNFFLLLLLSSCVSA). Disulfide bonds link C36–C115, C69–C74, C121–C321, and C200–C232. The Proton acceptor role is filled by H67. Residues D68, V71, G73, D75, and S77 each coordinate Ca(2+). P163 contacts substrate. Residue H193 coordinates heme b. T194 is a binding site for Ca(2+). Ca(2+) contacts are provided by D245, S248, and D253.

This sequence belongs to the peroxidase family. Classical plant (class III) peroxidase subfamily. It depends on heme b as a cofactor. Ca(2+) is required as a cofactor. As to expression, slightly expressed in roots.

It localises to the secreted. It carries out the reaction 2 a phenolic donor + H2O2 = 2 a phenolic radical donor + 2 H2O. Its function is as follows. Removal of H(2)O(2), oxidation of toxic reductants, biosynthesis and degradation of lignin, suberization, auxin catabolism, response to environmental stresses such as wounding, pathogen attack and oxidative stress. These functions might be dependent on each isozyme/isoform in each plant tissue. The chain is Peroxidase 45 (PER45) from Arabidopsis thaliana (Mouse-ear cress).